A 639-amino-acid chain; its full sequence is Extracellular metalloproteinase mep (639 aa).

The N-terminal stretch at 1-16 (MHMLSFIGALALPVFV) is a signal peptide. A propeptide spanning residues 17–245 (CAQSCEPASL…IHGVVDYISE (229 aa)) is cleaved from the precursor. Residues Asn-287, Asn-320, Asn-336, and Asn-368 are each glycosylated (N-linked (GlcNAc...) asparagine). His-429 serves as a coordination point for Zn(2+). Residue Glu-430 is part of the active site. His-433 is a Zn(2+) binding site. Asn-509 is a glycosylation site (N-linked (GlcNAc...) asparagine).

It belongs to the peptidase M36 family. Zn(2+) serves as cofactor.

The protein localises to the secreted. Its function is as follows. Secreted metalloproteinase that allows assimilation of proteinaceous substrates. This is Extracellular metalloproteinase mep (mep) from Aspergillus flavus (strain ATCC 200026 / FGSC A1120 / IAM 13836 / NRRL 3357 / JCM 12722 / SRRC 167).